Here is a 115-residue protein sequence, read N- to C-terminus: Large ribosomal subunit protein bL31B (115 aa).

The protein belongs to the bacterial ribosomal protein bL31 family. Type B subfamily. As to quaternary structure, part of the 50S ribosomal subunit.

In Polynucleobacter asymbioticus (strain DSM 18221 / CIP 109841 / QLW-P1DMWA-1) (Polynucleobacter necessarius subsp. asymbioticus), this protein is Large ribosomal subunit protein bL31B.